A 687-amino-acid chain; its full sequence is Homoaconitase, mitochondrial (687 aa).

A mitochondrion-targeting transit peptide spans 1–18 (MFAFRNRAVTQTLLVRRY). [4Fe-4S] cluster is bound by residues Cys-340, Cys-400, and Cys-403. Positions 481–490 (EAEADAEAAE) are enriched in acidic residues. The tract at residues 481–500 (EAEADAEAAESDPAPSGGVL) is disordered.

This sequence belongs to the aconitase/IPM isomerase family. The cofactor is [4Fe-4S] cluster.

The protein resides in the mitochondrion. The catalysed reaction is (2R,3S)-homoisocitrate = cis-homoaconitate + H2O. It functions in the pathway amino-acid biosynthesis; L-lysine biosynthesis via AAA pathway; L-alpha-aminoadipate from 2-oxoglutarate: step 3/5. Functionally, catalyzes the reversible hydration of cis-homoaconitate to (2R,3S)-homoisocitrate, a step in the alpha-aminoadipate pathway for lysine biosynthesis. This is Homoaconitase, mitochondrial (LYS4) from Yarrowia lipolytica (strain CLIB 122 / E 150) (Yeast).